A 347-amino-acid polypeptide reads, in one-letter code: tRNA pseudouridine synthase D (347 aa).

D78 serves as the catalytic Nucleophile. In terms of domain architecture, TRUD spans 150 to 304 (GLPNFFGPQR…AEGTRRAARL (155 aa)).

Belongs to the pseudouridine synthase TruD family.

It catalyses the reaction uridine(13) in tRNA = pseudouridine(13) in tRNA. Its function is as follows. Responsible for synthesis of pseudouridine from uracil-13 in transfer RNAs. The sequence is that of tRNA pseudouridine synthase D from Anaeromyxobacter dehalogenans (strain 2CP-C).